We begin with the raw amino-acid sequence, 148 residues long: UPF0260 protein ECA2365 (148 aa).

It belongs to the UPF0260 family.

This Pectobacterium atrosepticum (strain SCRI 1043 / ATCC BAA-672) (Erwinia carotovora subsp. atroseptica) protein is UPF0260 protein ECA2365.